The following is a 154-amino-acid chain: Large ribosomal subunit protein uL23 (154 aa).

Belongs to the universal ribosomal protein uL23 family.

This protein binds to a specific region on the 26S rRNA. This chain is Large ribosomal subunit protein uL23 (RPL23A), found in Daucus carota (Wild carrot).